We begin with the raw amino-acid sequence, 243 residues long: Small ribosomal subunit protein uS2c (243 aa).

The disordered stretch occupies residues Gly-224 to Gln-243.

It belongs to the universal ribosomal protein uS2 family.

It localises to the plastid. The protein resides in the chloroplast. The polypeptide is Small ribosomal subunit protein uS2c (rps2) (Rhodomonas salina (Cryptomonas salina)).